A 78-amino-acid chain; its full sequence is Translational regulator CsrA (78 aa).

This sequence belongs to the CsrA/RsmA family. As to quaternary structure, homodimer; the beta-strands of each monomer intercalate to form a hydrophobic core, while the alpha-helices form wings that extend away from the core.

The protein localises to the cytoplasm. A translational regulator that binds mRNA to regulate translation initiation and/or mRNA stability. Usually binds in the 5'-UTR at or near the Shine-Dalgarno sequence preventing ribosome-binding, thus repressing translation. Its main target seems to be the major flagellin gene, while its function is anatagonized by FliW. This Borrelia hermsii (strain HS1 / DAH) protein is Translational regulator CsrA.